Reading from the N-terminus, the 600-residue chain is DDB1- and CUL4-associated factor 8-like protein 1 (600 aa).

The tract at residues 1 to 122 is disordered; the sequence is MSHQEGSTGG…EEEQPRMCPR (122 aa). 2 stretches are compositionally biased toward acidic residues: residues 74–83 and 96–115; these read SSSEDVELES and EETEREEEEEEMEEEGEEEE. WD repeat units lie at residues 194–233, 237–278, 284–324, 332–372, 388–427, 435–475, and 479–518; these read SHAGSVSTIHFNQRGTRLASSGDDLRVIVWDWVRQKPVLN, GHDI…YCEN, KHRG…PASK, DKKV…KKEN, DFPTNITCVVYSHDGTELLASYNDEDIYLFNSSLSDGAQY, RNND…IIQF, and DRGDIVNCLEPHPYLPVLATSGLDQHVRIWTPTAKTATEL. Residues 562–600 are disordered; that stretch reads PGWRDHGAEFPDEEELDESSSTSDTSEEEGQDRVQCIPS.

The protein belongs to the WD repeat DCAF8 family.

The polypeptide is DDB1- and CUL4-associated factor 8-like protein 1 (DCAF8L1) (Homo sapiens (Human)).